The chain runs to 432 residues: Adenylosuccinate synthetase (432 aa).

Residues 13-19 (GDEGKGK) and 41-43 (GHT) each bind GTP. Asp-14 acts as the Proton acceptor in catalysis. The Mg(2+) site is built by Asp-14 and Gly-41. Residues 14–17 (DEGK), 39–42 (NAGH), Thr-130, Arg-144, Gln-225, Thr-240, and Arg-304 contribute to the IMP site. His-42 acts as the Proton donor in catalysis. Residue 300–306 (ATTGRKR) participates in substrate binding. Residues Arg-306, 332-334 (KLD), and 415-417 (STG) contribute to the GTP site.

Belongs to the adenylosuccinate synthetase family. In terms of assembly, homodimer. Mg(2+) is required as a cofactor.

The protein resides in the cytoplasm. It catalyses the reaction IMP + L-aspartate + GTP = N(6)-(1,2-dicarboxyethyl)-AMP + GDP + phosphate + 2 H(+). The protein operates within purine metabolism; AMP biosynthesis via de novo pathway; AMP from IMP: step 1/2. Plays an important role in the de novo pathway of purine nucleotide biosynthesis. Catalyzes the first committed step in the biosynthesis of AMP from IMP. The polypeptide is Adenylosuccinate synthetase (Pseudoalteromonas atlantica (strain T6c / ATCC BAA-1087)).